We begin with the raw amino-acid sequence, 347 residues long: Fatty acid elongase 2 (347 aa).

Residues 1–62 are Lumenal-facing; the sequence is MNSLVTQYAA…PSEFQFIAGE (62 aa). A glycan (N-linked (GlcNAc...) asparagine) is linked at Asn-32. Residues 63–83 form a helical membrane-spanning segment; that stretch reads LPLSTLPPVLYAITAYYVIIF. Residues 84–96 are Cytoplasmic-facing; sequence GGRFLLSKSKPFK. A helical transmembrane segment spans residues 97–119; it reads LNGLFQLHNLVLTSLSLTLLLLM. The Lumenal segment spans residues 120–122; sequence VEQ. Residues 123–142 form a helical membrane-spanning segment; it reads LVPIIVQHGLYFAICNIGAW. Residues 143-146 lie on the Cytoplasmic side of the membrane; sequence TQPL. Residues 147 to 169 traverse the membrane as a helical segment; the sequence is VTLYYMNYIVKFIEFIDTFFLVL. Residues 170-200 lie on the Lumenal side of the membrane; the sequence is KHKKLTFLHTYHHGATALLCYTQLMGTTSIS. The HxxHH motif signature appears at 178–182; it reads HTYHH. Residues 201–221 form a helical membrane-spanning segment; sequence WVPISLNLGVHVVMYWYYFLA. Residues 222–231 are Cytoplasmic-facing; that stretch reads ARGIRVWWKE. Residues 232–254 form a helical membrane-spanning segment; the sequence is WVTRFQIIQFVLDIGFIYFAVYQ. The Lumenal segment spans residues 255–275; it reads KAVHLYFPILPHCGDCVGSTT. The helical transmembrane segment at 276-296 threads the bilayer; the sequence is ATFAGCAIISSYLVLFISFYI. At 297–347 the chain is on the cytoplasmic side; sequence NVYKRKGTKTSRVVKRAHGGVAAKVNEYVNVDLKNVPTPSPSPKPQHRRKR. A Phosphothreonine modification is found at Thr-334. Residues Ser-336 and Ser-338 each carry the phosphoserine modification. The short motif at 344 to 347 is the Di-lysine-like motif element; it reads RRKR.

This sequence belongs to the ELO family.

The protein localises to the endoplasmic reticulum membrane. The enzyme catalyses a very-long-chain acyl-CoA + malonyl-CoA + H(+) = a very-long-chain 3-oxoacyl-CoA + CO2 + CoA. The catalysed reaction is octadecanoyl-CoA + malonyl-CoA + H(+) = 3-oxoeicosanoyl-CoA + CO2 + CoA. It catalyses the reaction hexadecanoyl-CoA + malonyl-CoA + H(+) = 3-oxooctadecanoyl-CoA + CO2 + CoA. It carries out the reaction eicosanoyl-CoA + malonyl-CoA + H(+) = 3-oxodocosanoyl-CoA + CO2 + CoA. The enzyme catalyses docosanoyl-CoA + malonyl-CoA + H(+) = 3-oxotetracosanoyl-CoA + CO2 + CoA. Functionally, component of a microsomal membrane-bound long-chain fatty acid elongation system, which produces the 20-26-carbon very long-chain fatty acids (VLCFA) from long-chain fatty acid precursors and is involved ceramide and inositol sphingolipid biosynthesis. Component of elongase II, which elongates 16-18 carbon fatty acyl-CoAs such as palmitoyl-CoA and stearoyl-CoA to 20-22-carbon fatty acids by incorporation of malonyl-CoA. Involved in the synthesis of 1,3-beta-glucan. The enzymes active site faces the cytosol, whereas VLCFA length is determined by a lysine near the luminal end of transmembrane helix 6. Plays an important role in lipotoxic cell death induced by oleic acid through maintaining a balanced fatty acid composition in thr plasma membrane. The sequence is that of Fatty acid elongase 2 from Saccharomyces cerevisiae (strain ATCC 204508 / S288c) (Baker's yeast).